A 1641-amino-acid chain; its full sequence is Maestro heat-like repeat-containing protein family member 1 (1641 aa).

7 HEAT repeats span residues 3–41, 159–198, 344–382, 385–423, 1048–1086, 1358–1396, and 1605–1641; these read ESSM…ARPV, VPFL…GALE, CSSP…SAAA, EDKK…HGYL, PDQL…ERGG, LMLL…GCPD, and QVDL…VKLA.

The protein belongs to the MROH1 family. Homooligomer; homooligomerizes at lysosome scission sites.

The protein localises to the lysosome membrane. Its function is as follows. Lysosome fission factor. Recruited to lysosomes by RAB7 (RAB7A or RAB7B) at scission sites and homooligomerizes to mediate the constriction and scission of lysosomal tubules. May sever membranes by inserting amphipathic helices into one bilayer leaflet. Lysosome fission is required to maintain their steady-state number, shape, size, composition and function, and to accomplish regeneration. This chain is Maestro heat-like repeat-containing protein family member 1, found in Homo sapiens (Human).